Reading from the N-terminus, the 230-residue chain is Leucyl/phenylalanyl-tRNA--protein transferase (230 aa).

Belongs to the L/F-transferase family.

The protein resides in the cytoplasm. The catalysed reaction is N-terminal L-lysyl-[protein] + L-leucyl-tRNA(Leu) = N-terminal L-leucyl-L-lysyl-[protein] + tRNA(Leu) + H(+). It catalyses the reaction N-terminal L-arginyl-[protein] + L-leucyl-tRNA(Leu) = N-terminal L-leucyl-L-arginyl-[protein] + tRNA(Leu) + H(+). It carries out the reaction L-phenylalanyl-tRNA(Phe) + an N-terminal L-alpha-aminoacyl-[protein] = an N-terminal L-phenylalanyl-L-alpha-aminoacyl-[protein] + tRNA(Phe). In terms of biological role, functions in the N-end rule pathway of protein degradation where it conjugates Leu, Phe and, less efficiently, Met from aminoacyl-tRNAs to the N-termini of proteins containing an N-terminal arginine or lysine. This Rhodopseudomonas palustris (strain BisB18) protein is Leucyl/phenylalanyl-tRNA--protein transferase.